Consider the following 361-residue polypeptide: Chorismate synthase (361 aa).

The NADP(+) site is built by Arg-48 and Arg-54. FMN contacts are provided by residues 125–127 (RSS), 238–239 (NA), Gly-278, 293–297 (KPTSS), and Arg-319.

This sequence belongs to the chorismate synthase family. In terms of assembly, homotetramer. FMNH2 serves as cofactor.

It carries out the reaction 5-O-(1-carboxyvinyl)-3-phosphoshikimate = chorismate + phosphate. Its pathway is metabolic intermediate biosynthesis; chorismate biosynthesis; chorismate from D-erythrose 4-phosphate and phosphoenolpyruvate: step 7/7. Its function is as follows. Catalyzes the anti-1,4-elimination of the C-3 phosphate and the C-6 proR hydrogen from 5-enolpyruvylshikimate-3-phosphate (EPSP) to yield chorismate, which is the branch point compound that serves as the starting substrate for the three terminal pathways of aromatic amino acid biosynthesis. This reaction introduces a second double bond into the aromatic ring system. The polypeptide is Chorismate synthase (Photorhabdus laumondii subsp. laumondii (strain DSM 15139 / CIP 105565 / TT01) (Photorhabdus luminescens subsp. laumondii)).